The primary structure comprises 558 residues: WW domain-containing adapter protein with coiled-coil (558 aa).

Disordered stretches follow at residues 1–129 (MVMY…WSEH), 159–244 (QRQK…SPAP), and 321–461 (VAQQ…APGR). Over residues 22–32 (QPYQTLKYSSK) the composition is skewed to polar residues. Basic and acidic residues-rich tracts occupy residues 33–46 (SHPDHRHEKMRDSN) and 56–70 (RRSDSPDNKHMDNTG). The span at 72–82 (GRAKAIHPHRG) shows a compositional bias: basic residues. Low complexity predominate over residues 99-116 (NHSSLHSSNSHSNPNKSS). The region spanning 120 to 153 (FEPADDWSEHISSSGKKYYYNCRTEVSQWEKPKE) is the WW domain. Positions 175–184 (PKDRDYRREA) are enriched in basic and acidic residues. Residues 188–200 (TPASYSSTKSSIA) are compositionally biased toward polar residues. A compositionally biased stretch (low complexity) spans 204–217 (PSSLTPSSSSAAVS). Composition is skewed to polar residues over residues 223–234 (NSASSASGSTVP) and 321–378 (VAQQ…MTVK). A compositionally biased stretch (low complexity) spans 402 to 431 (SPRTLQRQSSQRSPSPGPNHMGSNSSSSSN). Over residues 432–443 (NGGGGGGQGPGV) the composition is skewed to gly residues. A coiled-coil region spans residues 529–555 (QATLREQRILFLRQQIKELEKLKNQNS).

Its subcellular location is the nucleus. In terms of biological role, acts as a linker between gene transcription and histone H2B monoubiquitination at 'Lys-120' (H2BK120ub1). Positive regulator of amino acid starvation-induced autophagy. Positively regulates MTOR activity. May negatively regulate the ubiquitin proteasome pathway. This is WW domain-containing adapter protein with coiled-coil (waca) from Danio rerio (Zebrafish).